Here is a 223-residue protein sequence, read N- to C-terminus: Imidazoleglycerol-phosphate dehydratase (223 aa).

It belongs to the imidazoleglycerol-phosphate dehydratase family.

It catalyses the reaction D-erythro-1-(imidazol-4-yl)glycerol 3-phosphate = 3-(imidazol-4-yl)-2-oxopropyl phosphate + H2O. It participates in amino-acid biosynthesis; L-histidine biosynthesis; L-histidine from 5-phospho-alpha-D-ribose 1-diphosphate: step 6/9. The chain is Imidazoleglycerol-phosphate dehydratase (HIS3) from Torulaspora delbrueckii (Yeast).